Here is a 153-residue protein sequence, read N- to C-terminus: 3-hydroxyacyl-[acyl-carrier-protein] dehydratase FabZ (153 aa).

The active site involves His54.

Belongs to the thioester dehydratase family. FabZ subfamily.

The protein localises to the cytoplasm. The enzyme catalyses a (3R)-hydroxyacyl-[ACP] = a (2E)-enoyl-[ACP] + H2O. Its function is as follows. Involved in unsaturated fatty acids biosynthesis. Catalyzes the dehydration of short chain beta-hydroxyacyl-ACPs and long chain saturated and unsaturated beta-hydroxyacyl-ACPs. The sequence is that of 3-hydroxyacyl-[acyl-carrier-protein] dehydratase FabZ from Shewanella pealeana (strain ATCC 700345 / ANG-SQ1).